The sequence spans 93 residues: Large ribosomal subunit protein uL23cz/uL23cy (93 aa).

The protein belongs to the universal ribosomal protein uL23 family. Part of the 50S ribosomal subunit.

The protein resides in the plastid. The protein localises to the chloroplast. Binds to 23S rRNA. This is Large ribosomal subunit protein uL23cz/uL23cy (rpl23-A) from Lotus japonicus (Lotus corniculatus var. japonicus).